The chain runs to 137 residues: Cell division protein SepF (137 aa).

This sequence belongs to the SepF family. Homodimer. Interacts with FtsZ.

The protein resides in the cytoplasm. Functionally, cell division protein that is part of the divisome complex and is recruited early to the Z-ring. Probably stimulates Z-ring formation, perhaps through the cross-linking of FtsZ protofilaments. Its function overlaps with FtsA. In Carboxydothermus hydrogenoformans (strain ATCC BAA-161 / DSM 6008 / Z-2901), this protein is Cell division protein SepF.